The chain runs to 282 residues: Elongation factor Ts (282 aa).

The segment at 79–82 (TDFV) is involved in Mg(2+) ion dislocation from EF-Tu.

This sequence belongs to the EF-Ts family.

The protein localises to the cytoplasm. Its function is as follows. Associates with the EF-Tu.GDP complex and induces the exchange of GDP to GTP. It remains bound to the aminoacyl-tRNA.EF-Tu.GTP complex up to the GTP hydrolysis stage on the ribosome. This is Elongation factor Ts from Shewanella loihica (strain ATCC BAA-1088 / PV-4).